A 1256-amino-acid polypeptide reads, in one-letter code: Neuronal cell adhesion molecule (1256 aa).

An N-terminal signal peptide occupies residues 1–29 (MQLKIMPKKKHLSAGGVPLILFLCQMISA). At 30-1119 (LDVPLDLVQP…ASRQVDIATQ (1090 aa)) the chain is on the extracellular side. Ig-like C2-type domains follow at residues 40-128 (PTIT…AAVS) and 135-229 (PSRS…QPIS). Disulfide bonds link cysteine 62–cysteine 117 and cysteine 161–cysteine 212. Asparagine 77 carries N-linked (GlcNAc...) asparagine glycosylation. Residues asparagine 217, asparagine 239, asparagine 245, asparagine 270, asparagine 308, and asparagine 371 are each glycosylated (N-linked (GlcNAc...) asparagine). Ig-like C2-type domains follow at residues 261–350 (PPTF…ISVT), 355–442 (PYWI…AFVN), 448–535 (PRIL…VHLE), and 539–626 (PTRI…AVLR). Cysteine 286 and cysteine 334 are oxidised to a cystine. Cysteines 376 and 426 form a disulfide. Asparagine 427 and asparagine 501 each carry an N-linked (GlcNAc...) asparagine glycan. 2 disulfide bridges follow: cysteine 470–cysteine 519 and cysteine 561–cysteine 610. Asparagine 613, asparagine 710, asparagine 796, asparagine 852, asparagine 987, asparagine 1003, asparagine 1013, and asparagine 1067 each carry an N-linked (GlcNAc...) asparagine glycan. Fibronectin type-III domains follow at residues 643-738 (PPFD…TKAA), 740-837 (PDQN…SGED), 842-944 (APGN…TPEG), and 948-1045 (APSS…VDEA). A helical transmembrane segment spans residues 1120 to 1142 (GWFIGLMCAVALLILILLIVCFI). Residues 1143 to 1256 (RRNKGGKYPV…SPVNAMNSFV (114 aa)) are Cytoplasmic-facing. The segment covering 1151–1171 (PVKEKEDAHADPEIQPMKEDD) has biased composition (basic and acidic residues). The tract at residues 1151–1256 (PVKEKEDAHA…SPVNAMNSFV (106 aa)) is disordered. Threonine 1173 is modified (phosphothreonine). A Phosphotyrosine modification is found at tyrosine 1177. Serine 1178 is subject to Phosphoserine. Over residues 1193 to 1202 (PSDRTVKKED) the composition is skewed to basic and acidic residues. A phosphoserine mark is found at serine 1203, serine 1206, serine 1223, serine 1242, serine 1243, and serine 1247. A compositionally biased stretch (polar residues) spans 1240–1256 (NESSEAPSPVNAMNSFV).

This sequence belongs to the immunoglobulin superfamily. L1/neurofascin/NgCAM family. In terms of assembly, constituent of a NFASC/NRCAM/ankyrin-G complex. Detected in a complex with CNTN1 and PTPRB. Interacts with GLDN/gliomedin and MYOC. In terms of tissue distribution, detected in sciatic nerve. Detected in brain, especially in the cerebellum Purkinje cell layer, inner granule cell layer and molecular layer (at protein level). Detected in neurons and Schwann cells.

The protein localises to the cell membrane. Its subcellular location is the cell projection. It localises to the axon. It is found in the secreted. Functionally, cell adhesion protein that is required for normal responses to cell-cell contacts in brain and in the peripheral nervous system. Plays a role in neurite outgrowth in response to contactin binding. Plays a role in mediating cell-cell contacts between Schwann cells and axons. Plays a role in the formation and maintenance of the nodes of Ranvier on myelinated axons. Nodes of Ranvier contain clustered sodium channels that are crucial for the saltatory propagation of action potentials along myelinated axons. During development, nodes of Ranvier are formed by the fusion of two heminodes. Required for normal clustering of sodium channels at heminodes; not required for the formation of mature nodes with normal sodium channel clusters. Required, together with GLDN, for maintaining NFASC and sodium channel clusters at mature nodes of Ranvier. This is Neuronal cell adhesion molecule (Nrcam) from Mus musculus (Mouse).